Reading from the N-terminus, the 263-residue chain is Putative alpha/beta hydrolase L404 (263 aa).

G2 carries N-myristoyl glycine; by host lipidation.

This sequence belongs to the AB hydrolase superfamily.

The polypeptide is Putative alpha/beta hydrolase L404 (Acanthamoeba polyphaga (Amoeba)).